The primary structure comprises 636 residues: Translation factor GUF1 homolog, chloroplastic (636 aa).

The tr-type G domain maps to 31–212; sequence NLARNFSIIA…AIVTKIPPPQ (182 aa). GTP-binding positions include 40-47, 105-109, and 159-162; these read AHIDHGKS, DTPGH, and NKID.

This sequence belongs to the TRAFAC class translation factor GTPase superfamily. Classic translation factor GTPase family. LepA subfamily.

It is found in the plastid. The protein localises to the chloroplast. The catalysed reaction is GTP + H2O = GDP + phosphate + H(+). In terms of biological role, promotes chloroplast protein synthesis. May act as a fidelity factor of the translation reaction, by catalyzing a one-codon backward translocation of tRNAs on improperly translocated ribosomes. The chain is Translation factor GUF1 homolog, chloroplastic from Oryza sativa subsp. indica (Rice).